The sequence spans 178 residues: DNA-directed RNA polymerase subunit beta (178 aa).

Belongs to the RNA polymerase beta chain family. As to quaternary structure, the RNAP catalytic core consists of 2 alpha, 1 beta, 1 beta' and 1 omega subunit. When a sigma factor is associated with the core the holoenzyme is formed, which can initiate transcription.

It catalyses the reaction RNA(n) + a ribonucleoside 5'-triphosphate = RNA(n+1) + diphosphate. DNA-dependent RNA polymerase catalyzes the transcription of DNA into RNA using the four ribonucleoside triphosphates as substrates. The protein is DNA-directed RNA polymerase subunit beta (rpoB) of Liberibacter asiaticus (Citrus greening disease).